A 1331-amino-acid polypeptide reads, in one-letter code: MFDVNLFDELRIGLATAEDIRRWSKGEVKKPETINYRTLKPEKDGLFCERIFGPTRDWECACGKYKRVRYKGIICERCGVEVTKSKVRRERMGHIELAAPVTHIWYFKGVPSRLGYLLDLAPKDLERIIYFAANIITSVDEEARHNDQSTLEAEMLLEKKDVEDDVEAEIAERAAKLEQDLAELEAAGAKADARRKVQNAADKEMQHIRERGEREVARLDEIWNTFIKLAPKQMIIDETIYEELVDRYEDYFTGGMGAEAIQTLIRNFDLEAEAEELKEIINNGKGQKKMRALKRLKVVAAFLRSGNDPAGMVLDAIPVIPPELRPMVQLDGGRFATSDLNDLYRRVINRNNRLKRMIDLGAPEIIVNNEKRMLQESVDALFDNGRRGRPVTGPGNRPLKSLSDLLKGKQGRFRQNLLGKRVDYSGRSVIIVGPQLKLHECGLPKLMALELFKPFVMKRLVENDYAQNIKSAKRMVERQRPEVWDVLEEAISEHPVMLNRAPTLHRLGIQAFEPKLVEGKAIQLHPLACEAFNADFDGDQMAVHLPLSAEAQAEARVLMLASNNILSPASGKPLAMPRLDMVTGLYYLTMDKGEDEIGGEGRYQPATEDRPEQGVYSSYAEAIMARDRGVLGLQAPIKVRISHLRPPSDIEAEQFPDGWQKGQAWLAETTLGRIMFNDLLPWNYPYLEGVMVRKGGAGNKMLLGDVINDLAAKYPMITVAQVLDKMKDAGFYWATRSGVTITMHDVLVLPNKTEVLESYEKEAERIERKYWEQGALTERERYDRLVELWKDATDTVGNAVEEMYPDDNPIPMIVKSGAAGNMRQIWTLAGMKGMVVNSKGDYITRPIKTSFREGLSVLEYFNNSHGSRKGLADTALRTADSGYLTRRLVDVAQDVIVREEDCGTRQGVRVPLGIEVAPGSYDLHELWETSASGRVVANDVKDENGEVIAEAGTDLTEELSRTIVNAGVLEIKVRSVLTCQTPAGVCAKCYGKSMASGQLVDIGEAVGIVAAQSIGEPGTQLTMRTFHQGGVGGDITGGLPRVQELFEARNPKNRAPIASVDGTVSLSDEGNFWTLTITPDDGSDNVVYEKLSKRQGLAQVRRPMESNPDAMIERSLRDGDHVSTGDRLMRGAPDPHDVLEVLGRRGVEKHLIDEVQAVYRAQGVAIHDKHIEIIIRQMLRRGTVIDAGTTDLLPGNLIDLSEAKQVNAAQVAEGGQPAQLRSEIMGITKASLATESWLSAASFQETTRVLTDAAINKRSDQLIGLKENVIIGKLIPAGTGISRYRNISVKPTEAARNAAYSIPTYGDSIYGDDGFGEFTGASVPLEEDYTF.

Residues Cys60, Cys62, Cys75, and Cys78 each coordinate Zn(2+). Mg(2+) contacts are provided by Asp535, Asp537, and Asp539. Residues Cys902, Cys979, Cys986, and Cys989 each coordinate Zn(2+).

It belongs to the RNA polymerase beta' chain family. As to quaternary structure, the RNAP catalytic core consists of 2 alpha, 1 beta, 1 beta' and 1 omega subunit. When a sigma factor is associated with the core the holoenzyme is formed, which can initiate transcription. Mg(2+) serves as cofactor. Zn(2+) is required as a cofactor.

It carries out the reaction RNA(n) + a ribonucleoside 5'-triphosphate = RNA(n+1) + diphosphate. In terms of biological role, DNA-dependent RNA polymerase catalyzes the transcription of DNA into RNA using the four ribonucleoside triphosphates as substrates. This is DNA-directed RNA polymerase subunit beta' from Corynebacterium aurimucosum (strain ATCC 700975 / DSM 44827 / CIP 107346 / CN-1) (Corynebacterium nigricans).